A 1138-amino-acid polypeptide reads, in one-letter code: Exportin-6-B (1138 aa).

The Importin N-terminal domain occupies 31–97 (IESLLNNFAQ…RSSLPKLLLS (67 aa)). The span at 291–307 (SVTTNTTSSVVNGGSSS) shows a compositional bias: low complexity. Residues 291–315 (SVTTNTTSSVVNGGSSSPPLHSAAP) form a disordered region.

This sequence belongs to the exportin family.

Its subcellular location is the nucleus. The protein resides in the cytoplasm. Its function is as follows. Mediates the nuclear export of actin and profilin-actin complexes in somatic cells. Oocyte nuclei lack active actin export. Mediates the nuclear export of actin and profilin-actin complexes in somatic cells. In Xenopus laevis (African clawed frog), this protein is Exportin-6-B (xpo6-b).